The primary structure comprises 943 residues: Conidiophore development regulator abaA (943 aa).

Disordered stretches follow at residues 1–69 (MSSS…FNGG) and 111–133 (TSRQHHHVPPPLPQVPTRYHQRG). Positions 29 to 43 (IDTRRSFHGDSRLPL) are enriched in basic and acidic residues. Over residues 59–68 (PSSAHSSFNG) the composition is skewed to polar residues. A DNA-binding region (TEA) is located at residues 161-254 (QKDKGGVWRR…QVVKKFFEDL (94 aa)). The segment covering 537 to 555 (EHQRKKEKRSCGKKPDLER) has biased composition (basic and acidic residues). Disordered stretches follow at residues 537 to 575 (EHQRKKEKRSCGKKPDLERSASSSKRKRSEDEGDAAAWT) and 809 to 901 (GAAG…HHPG). A compositionally biased stretch (low complexity) spans 865–889 (DSWTAGSSAGGAPAATPTGPDWGPT).

It belongs to the TEC1 family.

Its subcellular location is the nucleus. Functionally, brlA, abaA and wetA are pivotal regulators of conidiophore development and conidium maturation. They act individually and together to regulate their own expression and that of numerous other sporulation-specific genes. Binds to the sequence 5'-CATTCY-3', where Y is a pyrimidine, making both major- and minor-groove contacts. The chain is Conidiophore development regulator abaA from Hapsidospora chrysogena (Acremonium chrysogenum).